Reading from the N-terminus, the 33-residue chain is Cytochrome b6-f complex subunit 8 (33 aa).

The helical transmembrane segment at 2-22 (IFTLGWASLAAIFTFSIAMVV) threads the bilayer.

It belongs to the PetN family. In terms of assembly, the 4 large subunits of the cytochrome b6-f complex are cytochrome b6, subunit IV (17 kDa polypeptide, PetD), cytochrome f and the Rieske protein, while the 4 small subunits are PetG, PetL, PetM and PetN. The complex functions as a dimer.

Its subcellular location is the cellular thylakoid membrane. Its function is as follows. Component of the cytochrome b6-f complex, which mediates electron transfer between photosystem II (PSII) and photosystem I (PSI), cyclic electron flow around PSI, and state transitions. This Prochlorococcus marinus (strain NATL2A) protein is Cytochrome b6-f complex subunit 8.